The sequence spans 134 residues: Small ribosomal subunit protein uS8c (134 aa).

This sequence belongs to the universal ribosomal protein uS8 family. In terms of assembly, part of the 30S ribosomal subunit.

The protein resides in the plastid. Its subcellular location is the chloroplast. In terms of biological role, one of the primary rRNA binding proteins, it binds directly to 16S rRNA central domain where it helps coordinate assembly of the platform of the 30S subunit. This chain is Small ribosomal subunit protein uS8c (rps8), found in Chloranthus spicatus (Chulantree).